A 263-amino-acid chain; its full sequence is DNA repair protein RecO (263 aa).

The disordered stretch occupies residues 243-263 (DRKETARETVPTSDGTASNAV). Positions 252-263 (VPTSDGTASNAV) are enriched in polar residues.

Belongs to the RecO family.

Functionally, involved in DNA repair and RecF pathway recombination. This chain is DNA repair protein RecO, found in Neisseria meningitidis serogroup C / serotype 2a (strain ATCC 700532 / DSM 15464 / FAM18).